Here is a 414-residue protein sequence, read N- to C-terminus: MMLGPEGGEGFVVKLRGLPWSCSVEDVQNFLSDCTIHDGVAGVHFIYTREGRQSGEAFVELESEDDVKLALKKDRESMGHRYIEVFKSHRTEMDWVLKHSGPNSADTANDGFVRLRGLPFGCTKEEIIQFFSGLEIVPNGITLPVDPEGKITGEAFVQFASQELAEKALGKHKERIGHRYIEVFKSSQEEVRSYSDPPLKFMSVQRPGPYDRPGTARRYIGIVKQAGLERMRSGAYSAGYGGYEEYSGLSDGYGFTTDLFGRDLSYCLSGMYDHRYGDGEFTVQSTTGHCVHMRGLPYKATENDIYNFFSPLNPVRVHIEIGPDGRVTGEADVEFATHEEAVAAMSKDRANMQHRYIELFLNSTTGASNGAYSSQMMQGMGVSTQSTYSGLESQSVSGCYGAGYGGQNSMGGYD.

Met1 is modified (N-acetylmethionine). Met2 bears the N-acetylmethionine; in Heterogeneous nuclear ribonucleoprotein F, N-terminally processed mark. The RRM 1 domain occupies 11-90; the sequence is FVVKLRGLPW…RYIEVFKSHR (80 aa). Residue Lys72 forms a Glycyl lysine isopeptide (Lys-Gly) (interchain with G-Cter in SUMO) linkage. The segment at 81–86 is interaction with RNA; the sequence is RYIEVF. Lys87 is covalently cross-linked (Glycyl lysine isopeptide (Lys-Gly) (interchain with G-Cter in SUMO2)). Ser104 and Ser161 each carry phosphoserine. In terms of domain architecture, RRM 2 spans 111–188; sequence GFVRLRGLPF…RYIEVFKSSQ (78 aa). Lys167 is covalently cross-linked (Glycyl lysine isopeptide (Lys-Gly) (interchain with G-Cter in SUMO2)). The segment at 179-184 is interaction with RNA; that stretch reads RYIEVF. Residue Lys185 forms a Glycyl lysine isopeptide (Lys-Gly) (interchain with G-Cter in SUMO2) linkage. Phosphoserine is present on residues Ser187, Ser193, and Ser195. The residue at position 200 (Lys200) is an N6-acetyllysine; alternate. Lys200 is covalently cross-linked (Glycyl lysine isopeptide (Lys-Gly) (interchain with G-Cter in SUMO2); alternate). A Phosphothreonine modification is found at Thr215. The residue at position 224 (Lys224) is an N6-acetyllysine; alternate. Lys224 participates in a covalent cross-link: Glycyl lysine isopeptide (Lys-Gly) (interchain with G-Cter in SUMO2); alternate. Ser265 is modified (phosphoserine). Residues 289–366 enclose the RRM 3 domain; sequence HCVHMRGLPY…IELFLNSTTG (78 aa). Residues 355-360 are interaction with RNA; that stretch reads RYIELF.

As to quaternary structure, identified in the spliceosome C complex. Interacts with AGO1, AGO2, TBP and TXNL4/DIM1. Sumoylated.

Its subcellular location is the nucleus. It localises to the nucleoplasm. Its function is as follows. Component of the heterogeneous nuclear ribonucleoprotein (hnRNP) complexes which provide the substrate for the processing events that pre-mRNAs undergo before becoming functional, translatable mRNAs in the cytoplasm. Plays a role in the regulation of alternative splicing events. Binds G-rich sequences in pre-mRNAs and keeps target RNA in an unfolded state. This Bos taurus (Bovine) protein is Heterogeneous nuclear ribonucleoprotein F (HNRNPF).